The primary structure comprises 354 residues: Uroporphyrinogen decarboxylase (354 aa).

Substrate-binding positions include 27 to 31, D77, Y154, T209, and H327; that span reads RQAGR.

It belongs to the uroporphyrinogen decarboxylase family. As to quaternary structure, homodimer.

The protein resides in the cytoplasm. The enzyme catalyses uroporphyrinogen III + 4 H(+) = coproporphyrinogen III + 4 CO2. It participates in porphyrin-containing compound metabolism; protoporphyrin-IX biosynthesis; coproporphyrinogen-III from 5-aminolevulinate: step 4/4. Catalyzes the decarboxylation of four acetate groups of uroporphyrinogen-III to yield coproporphyrinogen-III. This Salmonella schwarzengrund (strain CVM19633) protein is Uroporphyrinogen decarboxylase.